The sequence spans 1268 residues: Meiosis inhibitor protein 1 (1268 aa).

Strongly expressed in testis, weakly in brain, and not detected in spleen, liver, kidney, small intestine or colon.

Functionally, required for normal meiotic chromosome synapsis. May be involved in the formation of meiotic double-strand breaks (DSBs) in spermatocytes. In Mus musculus (Mouse), this protein is Meiosis inhibitor protein 1.